The primary structure comprises 429 residues: Glutamate-1-semialdehyde 2,1-aminomutase 1 (429 aa).

K268 bears the N6-(pyridoxal phosphate)lysine mark.

Belongs to the class-III pyridoxal-phosphate-dependent aminotransferase family. HemL subfamily. As to quaternary structure, homodimer. The cofactor is pyridoxal 5'-phosphate.

The protein resides in the cytoplasm. It catalyses the reaction (S)-4-amino-5-oxopentanoate = 5-aminolevulinate. It participates in porphyrin-containing compound metabolism; protoporphyrin-IX biosynthesis; 5-aminolevulinate from L-glutamyl-tRNA(Glu): step 2/2. This chain is Glutamate-1-semialdehyde 2,1-aminomutase 1, found in Staphylococcus saprophyticus subsp. saprophyticus (strain ATCC 15305 / DSM 20229 / NCIMB 8711 / NCTC 7292 / S-41).